Here is a 378-residue protein sequence, read N- to C-terminus: Anhydro-N-acetylmuramic acid kinase (378 aa).

Residue 9-16 (GTSVDGID) participates in ATP binding.

Belongs to the anhydro-N-acetylmuramic acid kinase family.

It catalyses the reaction 1,6-anhydro-N-acetyl-beta-muramate + ATP + H2O = N-acetyl-D-muramate 6-phosphate + ADP + H(+). It participates in amino-sugar metabolism; 1,6-anhydro-N-acetylmuramate degradation. It functions in the pathway cell wall biogenesis; peptidoglycan recycling. Its function is as follows. Catalyzes the specific phosphorylation of 1,6-anhydro-N-acetylmuramic acid (anhMurNAc) with the simultaneous cleavage of the 1,6-anhydro ring, generating MurNAc-6-P. Is required for the utilization of anhMurNAc either imported from the medium or derived from its own cell wall murein, and thus plays a role in cell wall recycling. This chain is Anhydro-N-acetylmuramic acid kinase, found in Microcystis aeruginosa (strain NIES-843 / IAM M-2473).